Consider the following 328-residue polypeptide: MSLIKIDQKAYEYNLRHIAKKIGSFQRLICVFKDNAYGHGAKLLAPLAKNLGVSFVAVKSEEEAQEIEEFFENILILSHRPHGNENSRFIYALNDISQVKKYKQDIKIHLKIDTGMHRNGICVENLEHAIDLIRSSDLKLTGMFTHFASADEMDGSFFVQKENFQKAKKIVKKYFSNLLFHSHNSAALFRGKIPEDEYCRVGLVQFGYGDSNLKKVLSLYAHRLSQRILQKGQSIGYGGIFTAAKDMEVATYDLGYADGLFRYNGKGELVLGNGKVMLGKMSMDSFSCENSGEEICVFKDADIWADFFHTINYEILVKLNPNIQRVLV.

Catalysis depends on K33, which acts as the Proton acceptor; specific for D-alanine. K33 is modified (N6-(pyridoxal phosphate)lysine). R118 lines the substrate pocket. The active-site Proton acceptor; specific for L-alanine is the Y237. Residue M283 participates in substrate binding.

It belongs to the alanine racemase family. It depends on pyridoxal 5'-phosphate as a cofactor.

The catalysed reaction is L-alanine = D-alanine. It functions in the pathway amino-acid biosynthesis; D-alanine biosynthesis; D-alanine from L-alanine: step 1/1. Its function is as follows. Catalyzes the interconversion of L-alanine and D-alanine. May also act on other amino acids. This is Alanine racemase (alr) from Campylobacter jejuni subsp. jejuni serotype O:23/36 (strain 81-176).